The primary structure comprises 421 residues: 3-phosphoshikimate 1-carboxyvinyltransferase (421 aa).

3 residues coordinate 3-phosphoshikimate: Lys21, Ser22, and Arg26. Lys21 provides a ligand contact to phosphoenolpyruvate. Residues Gly93 and Arg121 each contribute to the phosphoenolpyruvate site. Positions 166, 167, 168, 194, 310, and 337 each coordinate 3-phosphoshikimate. Position 168 (Gln168) interacts with phosphoenolpyruvate. Asp310 (proton acceptor) is an active-site residue. Positions 341, 382, and 407 each coordinate phosphoenolpyruvate.

The protein belongs to the EPSP synthase family. Monomer.

The protein localises to the cytoplasm. It catalyses the reaction 3-phosphoshikimate + phosphoenolpyruvate = 5-O-(1-carboxyvinyl)-3-phosphoshikimate + phosphate. The protein operates within metabolic intermediate biosynthesis; chorismate biosynthesis. Catalyzes the transfer of the enolpyruvyl moiety of phosphoenolpyruvate (PEP) to the 5-hydroxyl of shikimate-3-phosphate (S3P) to produce enolpyruvyl shikimate-3-phosphate and inorganic phosphate. In Methanoregula boonei (strain DSM 21154 / JCM 14090 / 6A8), this protein is 3-phosphoshikimate 1-carboxyvinyltransferase.